Reading from the N-terminus, the 103-residue chain is Large ribosomal subunit protein uL24 (103 aa).

This sequence belongs to the universal ribosomal protein uL24 family. Part of the 50S ribosomal subunit.

One of two assembly initiator proteins, it binds directly to the 5'-end of the 23S rRNA, where it nucleates assembly of the 50S subunit. Functionally, one of the proteins that surrounds the polypeptide exit tunnel on the outside of the subunit. In Alkaliphilus metalliredigens (strain QYMF), this protein is Large ribosomal subunit protein uL24.